A 377-amino-acid polypeptide reads, in one-letter code: Histone deacetylase 8 (377 aa).

Positions 14 to 324 (LVPVYIYSPE…WTYLTGVILG (311 aa)) are histone deacetylase. At S39 the chain carries Phosphoserine. Residue D101 coordinates substrate. The Proton acceptor role is filled by H143. G151 contributes to the substrate binding site. Positions 178, 180, and 267 each coordinate a divalent metal cation. Y306 serves as a coordination point for substrate.

Belongs to the histone deacetylase family. HD type 1 subfamily. In terms of assembly, interacts with PEPB2-MYH11, a fusion protein consisting of the 165 N-terminal residues of CBF-beta (PEPB2) with the tail region of MYH11 produced by the inversion Inv(16)(p13q22), a translocation associated with acute myeloid leukemia of M4EO subtype. The PEPB2-MYH1 fusion protein also interacts with RUNX1, a well known transcriptional regulator, suggesting that the interaction with HDAC8 may participate in the conversion of RUNX1 into a constitutive transcriptional repressor. Interacts with CBFA2T3. Interacts with phosphorylated SMG5/EST1B; this interaction protects SMG5 from ubiquitin-mediated degradation. Associates with alpha-SMA (smooth muscle alpha-actin). A divalent metal cation is required as a cofactor. Phosphorylated by PKA on serine 39. Phosphorylation reduces deacetylase activity observed preferentially on histones H3 and H4. As to expression, weakly expressed in most tissues. Expressed at higher level in heart, brain, kidney and pancreas and also in liver, lung, placenta, prostate and kidney.

It localises to the nucleus. The protein localises to the chromosome. The protein resides in the cytoplasm. The catalysed reaction is N(6)-acetyl-L-lysyl-[histone] + H2O = L-lysyl-[histone] + acetate. The enzyme catalyses N(6)-acetyl-L-lysyl-[protein] + H2O = L-lysyl-[protein] + acetate. It catalyses the reaction N(6)-(2E)-butenoyl-L-lysyl-[protein] + H2O = (2E)-2-butenoate + L-lysyl-[protein]. With respect to regulation, its activity is inhibited by trichostatin A (TSA), suberoylanilide hydroxamic acid (SAHA), 3-(1-methyl-4-phenylacetyl-1H-2-pyrrolyl)-N-hydroxy-2-propenamide (APHA), 4-dimethylamino-N-(6-hydroxycarbamoyethyl)benzamide-N-hydroxy-7-(4-dimethylaminobenzoyl)aminoheptanamide (MS-344), 5-(4-methyl-benzoylamino)-biphenyl-3,4'-dicarboxylic acid 3-dimethylamide 4'-hydroxyamide (CRA-A) and butyrate. Its function is as follows. Histone deacetylase that catalyzes the deacetylation of lysine residues on the N-terminal part of the core histones (H2A, H2B, H3 and H4). Histone deacetylation gives a tag for epigenetic repression and plays an important role in transcriptional regulation, cell cycle progression and developmental events. Histone deacetylases act via the formation of large multiprotein complexes. Also involved in the deacetylation of cohesin complex protein SMC3 regulating release of cohesin complexes from chromatin. May play a role in smooth muscle cell contractility. In addition to protein deacetylase activity, also has protein-lysine deacylase activity: acts as a protein decrotonylase by mediating decrotonylation ((2E)-butenoyl) of histones. The sequence is that of Histone deacetylase 8 from Homo sapiens (Human).